Consider the following 79-residue polypeptide: Small ribosomal subunit protein bS18 (79 aa).

This sequence belongs to the bacterial ribosomal protein bS18 family. As to quaternary structure, part of the 30S ribosomal subunit. Forms a tight heterodimer with protein bS6.

Its function is as follows. Binds as a heterodimer with protein bS6 to the central domain of the 16S rRNA, where it helps stabilize the platform of the 30S subunit. The chain is Small ribosomal subunit protein bS18 from Streptococcus pneumoniae serotype 19F (strain G54).